A 204-amino-acid chain; its full sequence is High mobility group-T protein (204 aa).

DNA-binding regions (HMG box) lie at residues 8-78 and 94-162; these read PRGK…RSYI and PKRP…TAYR. Positions 162 to 204 are disordered; the sequence is RNKGKVPVSMPAKAAAPAKDDDDDDDDDDDDEDDDDDDDEDDE. Residues 181–204 are compositionally biased toward acidic residues; that stretch reads DDDDDDDDDDDDEDDDDDDDEDDE.

The protein belongs to the HMGB family.

The protein localises to the nucleus. It localises to the chromosome. Its function is as follows. Binds preferentially single-stranded DNA and unwinds double-stranded DNA. The chain is High mobility group-T protein from Oncorhynchus mykiss (Rainbow trout).